We begin with the raw amino-acid sequence, 391 residues long: Na(+)/H(+) antiporter NhaA (391 aa).

The next 11 membrane-spanning stretches (helical) occupy residues 14–34, 59–79, 95–115, 124–144, 154–174, 177–197, 213–233, 261–281, 287–307, 328–348, and 363–383; these read AGGI…NSPL, LLLW…GLEV, SLPT…YLFF, VGWA…MALL, VFLL…IALF, TDLS…LVAL, IILW…GVVI, FLIL…NVGF, PVPV…VLLF, IAPV…IASL, and IGIL…LSKV.

Belongs to the NhaA Na(+)/H(+) (TC 2.A.33) antiporter family.

The protein resides in the cell inner membrane. It carries out the reaction Na(+)(in) + 2 H(+)(out) = Na(+)(out) + 2 H(+)(in). In terms of biological role, na(+)/H(+) antiporter that extrudes sodium in exchange for external protons. The sequence is that of Na(+)/H(+) antiporter NhaA from Shewanella amazonensis (strain ATCC BAA-1098 / SB2B).